Reading from the N-terminus, the 368-residue chain is Putative transport protein bbp_117 (368 aa).

8 helical membrane passes run 13–35 (VIFS…RPFF), 39–61 (AWAS…LLWG), 68–90 (VMMT…NSLI), 159–181 (HFGR…YWNG), 216–238 (LGVV…ISGI), 248–270 (IIIF…IWLY), 277–299 (WGTV…RPIL), and 314–336 (GVIG…VLII).

Belongs to the autoinducer-2 exporter (AI-2E) (TC 2.A.86) family.

It is found in the cell membrane. The polypeptide is Putative transport protein bbp_117 (Buchnera aphidicola subsp. Baizongia pistaciae (strain Bp)).